We begin with the raw amino-acid sequence, 473 residues long: Photosystem II CP43 reaction center protein (473 aa).

Residues 1-14 (MKTLYSPRRFYPVE) constitute a propeptide that is removed on maturation. Thr15 is subject to N-acetylthreonine. Residue Thr15 is modified to Phosphothreonine. Helical transmembrane passes span 69–93 (LFEV…PHLA), 134–155 (LIGP…KDRN), 178–200 (KALF…RKIT), 255–275 (KPFA…LSYS), and 291–312 (WFNN…ASQA). Position 367 (Glu367) interacts with [CaMn4O5] cluster. The helical transmembrane segment at 447–471 (RARAAAAGFEKGIDRDLEPVLFMTP) threads the bilayer.

It belongs to the PsbB/PsbC family. PsbC subfamily. In terms of assembly, PSII is composed of 1 copy each of membrane proteins PsbA, PsbB, PsbC, PsbD, PsbE, PsbF, PsbH, PsbI, PsbJ, PsbK, PsbL, PsbM, PsbT, PsbX, PsbY, PsbZ, Psb30/Ycf12, at least 3 peripheral proteins of the oxygen-evolving complex and a large number of cofactors. It forms dimeric complexes. The cofactor is Binds multiple chlorophylls and provides some of the ligands for the Ca-4Mn-5O cluster of the oxygen-evolving complex. It may also provide a ligand for a Cl- that is required for oxygen evolution. PSII binds additional chlorophylls, carotenoids and specific lipids..

It localises to the plastid. The protein resides in the chloroplast thylakoid membrane. In terms of biological role, one of the components of the core complex of photosystem II (PSII). It binds chlorophyll and helps catalyze the primary light-induced photochemical processes of PSII. PSII is a light-driven water:plastoquinone oxidoreductase, using light energy to abstract electrons from H(2)O, generating O(2) and a proton gradient subsequently used for ATP formation. The polypeptide is Photosystem II CP43 reaction center protein (Gnetum parvifolium (Small-leaved jointfir)).